The primary structure comprises 963 residues: Translation initiation factor IF-2 (963 aa).

Residues Ser-53 to Gln-77 are compositionally biased toward basic and acidic residues. Residues Ser-53–Pro-377 are disordered. A compositionally biased stretch (polar residues) spans Ser-78–Val-87. Basic and acidic residues-rich tracts occupy residues Ile-98–Asp-110, Glu-123–Glu-183, Asp-197–Ala-250, and Pro-267–Glu-278. Over residues Ser-343 to Gly-356 the composition is skewed to gly residues. The region spanning Pro-463–Lys-632 is the tr-type G domain. The G1 stretch occupies residues Gly-472–Thr-479. Gly-472–Thr-479 contributes to the GTP binding site. The tract at residues Gly-497–His-501 is G2. Residues Asp-518–Gly-521 are G3. GTP contacts are provided by residues Asp-518–His-522 and Asn-572–Asp-575. The segment at Asn-572–Asp-575 is G4. The tract at residues Ser-608–Lys-610 is G5.

The protein belongs to the TRAFAC class translation factor GTPase superfamily. Classic translation factor GTPase family. IF-2 subfamily.

The protein localises to the cytoplasm. One of the essential components for the initiation of protein synthesis. Protects formylmethionyl-tRNA from spontaneous hydrolysis and promotes its binding to the 30S ribosomal subunits. Also involved in the hydrolysis of GTP during the formation of the 70S ribosomal complex. The protein is Translation initiation factor IF-2 of Cupriavidus taiwanensis (strain DSM 17343 / BCRC 17206 / CCUG 44338 / CIP 107171 / LMG 19424 / R1) (Ralstonia taiwanensis (strain LMG 19424)).